The following is an 805-amino-acid chain: Ubiquitin carboxyl-terminal hydrolase 5 (805 aa).

Residues 159-283 form the Rhodanese domain; the sequence is HGDALLLIDV…WVKLGGAYQS (125 aa). Residues 359 to 380 form a disordered region; it reads RNSPTVQKFSPHPPTTLSKLNT. In terms of domain architecture, USP spans 446–804; sequence VGLENIGNCC…SAYVLFYERI (359 aa). Cys-455 functions as the Nucleophile in the catalytic mechanism. Catalysis depends on His-761, which acts as the Proton acceptor.

It belongs to the peptidase C19 family.

The enzyme catalyses Thiol-dependent hydrolysis of ester, thioester, amide, peptide and isopeptide bonds formed by the C-terminal Gly of ubiquitin (a 76-residue protein attached to proteins as an intracellular targeting signal).. This is Ubiquitin carboxyl-terminal hydrolase 5 (UBP5) from Saccharomyces cerevisiae (strain ATCC 204508 / S288c) (Baker's yeast).